The sequence spans 534 residues: MKLTLWTYEGPPHVGAMRVATGMTGMHYVLHAPQGDTYADLLFTMIERRGKRPPVSYTTFQARDLGSDTAELFQSACRDAYERFQPQAIMVGSSCTAELIQDDTGGLADALSLPVPVVHLELPSYQRKENFGADESFLQICRKLARPMERTEKVSCNLLGPTALGFRHRDDILEVTRLLEGMGIAVNAVAPMGASPADIARLGAAHFNVLLYPETGESAARWAEKTLKQPYTKTVPIGVGATRDFVAEVAALAGVAPVADDSRLRQPWWSASVDSTYLTGKRVFLFGDATHVIAAARVARDEMGFEVVGMGCYNREFARPMRAAAKGYGLEALVTDDYLEVEEAIQALAPELILGTQMERHIAKRLGIPCAVISAPVHVQDFPARYSPQMGFEGANVLFDTWIHPLTMGLEEHLLTMFREDFEFHDEAGPSHHGGKAVPASAPRADEAAEALPLTGAETAEGGSIPPEAVPPAEAAAVPAGEIVWLTDAERELKKIPFFVRGKARRNTEKFAAEKGLTRISLETLYEAKAHYAR.

D36 contributes to the [4Fe-4S] cluster binding site. D274 (proton donor) is an active-site residue. 409 to 410 (GL) is a binding site for substrate. Residues 426–446 (DEAGPSHHGGKAVPASAPRAD) form a disordered region.

It belongs to the ChlB/BchB/BchZ family. Protochlorophyllide reductase is composed of three subunits; BchL, BchN and BchB. Forms a heterotetramer of two BchB and two BchN subunits. The cofactor is [4Fe-4S] cluster.

It catalyses the reaction chlorophyllide a + oxidized 2[4Fe-4S]-[ferredoxin] + 2 ADP + 2 phosphate = protochlorophyllide a + reduced 2[4Fe-4S]-[ferredoxin] + 2 ATP + 2 H2O. Its pathway is porphyrin-containing compound metabolism; bacteriochlorophyll biosynthesis (light-independent). Component of the dark-operative protochlorophyllide reductase (DPOR) that uses Mg-ATP and reduced ferredoxin to reduce ring D of protochlorophyllide (Pchlide) to form chlorophyllide a (Chlide). This reaction is light-independent. The NB-protein (BchN-BchB) is the catalytic component of the complex. The protein is Light-independent protochlorophyllide reductase subunit B of Cereibacter sphaeroides (strain ATCC 17023 / DSM 158 / JCM 6121 / CCUG 31486 / LMG 2827 / NBRC 12203 / NCIMB 8253 / ATH 2.4.1.) (Rhodobacter sphaeroides).